The primary structure comprises 122 residues: Prefoldin subunit 1 (122 aa).

Position 2 is an N-acetylalanine (A2).

The protein belongs to the prefoldin subunit beta family. In terms of assembly, heterohexamer of two PFD-alpha type and four PFD-beta type subunits.

Functionally, binds specifically to cytosolic chaperonin (c-CPN) and transfers target proteins to it. Binds to nascent polypeptide chain and promotes folding in an environment in which there are many competing pathways for nonnative proteins. This Mus musculus (Mouse) protein is Prefoldin subunit 1 (Pfdn1).